A 420-amino-acid polypeptide reads, in one-letter code: Tyrosine--tRNA ligase 2 (420 aa).

An L-tyrosine-binding site is contributed by Y36. The 'HIGH' region motif lies at 41–50 (PTADSLHIGH). Residues Y171 and Q175 each coordinate L-tyrosine. Residues 231–235 (KFGKT) carry the 'KMSKS' region motif. Residue K234 coordinates ATP. One can recognise an S4 RNA-binding domain in the interval 354–420 (LSLVDLLVTS…GKKKYFLLKY (67 aa)).

The protein belongs to the class-I aminoacyl-tRNA synthetase family. TyrS type 1 subfamily. As to quaternary structure, homodimer.

The protein resides in the cytoplasm. The enzyme catalyses tRNA(Tyr) + L-tyrosine + ATP = L-tyrosyl-tRNA(Tyr) + AMP + diphosphate + H(+). In terms of biological role, catalyzes the attachment of tyrosine to tRNA(Tyr) in a two-step reaction: tyrosine is first activated by ATP to form Tyr-AMP and then transferred to the acceptor end of tRNA(Tyr). The polypeptide is Tyrosine--tRNA ligase 2 (Enterococcus faecalis (strain ATCC 700802 / V583)).